Reading from the N-terminus, the 317-residue chain is Melanocyte-stimulating hormone receptor (317 aa).

The Extracellular segment spans residues 1 to 37; it reads MAVQGSQRRLLGSLNSTPTAIPQLGLAANQTGAWCLE. Asn29 carries N-linked (GlcNAc...) asparagine glycosylation. A helical membrane pass occupies residues 38 to 63; the sequence is VSIPDGLFLSLGLVSLVENVLVVATI. Residues 64 to 72 lie on the Cytoplasmic side of the membrane; that stretch reads AKNRNLHSP. The helical transmembrane segment at 73-93 threads the bilayer; sequence MYCFICCLALSDLLVSGGNVL. Over 94–118 the chain is Extracellular; that stretch reads ETAVILLLEAGALAARAAVVQQLDN. The chain crosses the membrane as a helical span at residues 119–140; it reads VIDVITCSSMLSSLCFLGAIAV. Topologically, residues 141 to 163 are cytoplasmic; that stretch reads DRYISIFYALRYHSIVTLPRARR. The helical transmembrane segment at 164–183 threads the bilayer; it reads AIAAIWVASVLFSTLFIAYY. Topologically, residues 184-191 are extracellular; that stretch reads DHAAVLLC. The chain crosses the membrane as a helical span at residues 192–211; that stretch reads LVVFFLAMLVLMAVLYVHML. Residues 212–240 lie on the Cytoplasmic side of the membrane; that stretch reads ARACQHAQGIARLHKRQRPVHQGFGLKGA. The chain crosses the membrane as a helical span at residues 241-266; sequence VTLTILLGIFFLCWGPFFLHLTLIVL. The Extracellular portion of the chain corresponds to 267-279; that stretch reads CPQHPTCSCIFKN. A helical transmembrane segment spans residues 280–300; the sequence is FNLFLALIICNAIIDPLIYAF. The Cytoplasmic segment spans residues 301–317; sequence RSQELRRTLKEVLTCSW. Residue Cys315 is the site of S-palmitoyl cysteine attachment.

It belongs to the G-protein coupled receptor 1 family. In terms of assembly, interacts with MGRN1, but does not undergo MGRN1-mediated ubiquitination; this interaction competes with GNAS-binding and thus inhibits agonist-induced cAMP production. Interacts with OPN3; the interaction results in a decrease in MC1R-mediated cAMP signaling and ultimately a decrease in melanin production in melanocytes.

Its subcellular location is the cell membrane. In terms of biological role, receptor for MSH (alpha, beta and gamma) and ACTH. The activity of this receptor is mediated by G proteins which activate adenylate cyclase. Mediates melanogenesis, the production of eumelanin (black/brown) and phaeomelanin (red/yellow), via regulation of cAMP signaling in melanocytes. This Pongo pygmaeus (Bornean orangutan) protein is Melanocyte-stimulating hormone receptor (MC1R).